The sequence spans 449 residues: Glucose-6-phosphate isomerase (449 aa).

The active-site Proton donor is Glu-290. Catalysis depends on residues His-311 and Lys-425.

It belongs to the GPI family.

The protein localises to the cytoplasm. The catalysed reaction is alpha-D-glucose 6-phosphate = beta-D-fructose 6-phosphate. It functions in the pathway carbohydrate biosynthesis; gluconeogenesis. The protein operates within carbohydrate degradation; glycolysis; D-glyceraldehyde 3-phosphate and glycerone phosphate from D-glucose: step 2/4. Its function is as follows. Catalyzes the reversible isomerization of glucose-6-phosphate to fructose-6-phosphate. In Exiguobacterium sibiricum (strain DSM 17290 / CCUG 55495 / CIP 109462 / JCM 13490 / 255-15), this protein is Glucose-6-phosphate isomerase.